The chain runs to 3401 residues: Genome polyprotein (3401 aa).

The Cytoplasmic segment spans residues 1–104; the sequence is MPVRPRNKPK…GRKKRRSMTH (104 aa). A propeptide spans 101–117 (ER anchor for the capsid protein C, removed in mature form by serine protease NS3); it reads SMTHGIILSLGVTMVIG. The chain crosses the membrane as a helical span at residues 105–125; the sequence is GIILSLGVTMVIGASLHHHGG. At 126-240 the chain is on the extracellular side; sequence RYLLNVTHAD…GERQIQRIER (115 aa). N-linked (GlcNAc...) asparagine; by host glycans are attached at residues N130 and N146. Residues 241 to 261 form a helical membrane-spanning segment; that stretch reads WMMRNPFYAAISLLLAWWVGS. Residues 262-266 are Cytoplasmic-facing; it reads DIKQK. Residues 267–281 traverse the membrane as a helical segment; that stretch reads VLIAFLVLAIGPAYS. Over 282 to 725 the chain is Extracellular; that stretch reads THCVGIPKRD…HTVFGNVFHS (444 aa). Intrachain disulfides connect C284-C311, C355-C386, C373-C397, C462-C564, and C581-C611. The interval 379–392 is fusion peptide; the sequence is DRGWGNGCGLFGKG. Residues 726–746 traverse the membrane as a helical segment; it reads IFGGLSWITKIILGGMFLWLG. Topologically, residues 747–753 are extracellular; sequence VNSRNQT. Residues 754–774 traverse the membrane as a helical segment; that stretch reads MCMVLMAVGGILLFMTLGVSG. Over 775–1122 the chain is Extracellular; the sequence is EVGCSLDIKR…NVHEEHLVRS (348 aa). Cystine bridges form between C778/C789, C829/C916, C952/C997, C1054/C1103, C1065/C1087, and C1086/C1090. N-linked (GlcNAc...) asparagine; by host glycans are attached at residues N904 and N981. Residues 1123-1143 form a helical membrane-spanning segment; the sequence is WASAGTGMAESSLGLVALFLF. At 1144–1198 the chain is on the cytoplasmic side; that stretch reads TDIFARKRMTRKFMVIGCLGVLSVMIVGGFTALDLIRYIIVVGQHFASMNHGGDV. Residues 1199–1219 traverse the membrane as a helical segment; that stretch reads AYLAIIAVGKLRPGLLMMYSF. At 1220 to 1287 the chain is on the lumenal side; it reads KAAWSPKERV…PILALLTPLS (68 aa). Residues 1288–1308 traverse the membrane as a helical segment; that stretch reads MEIIRKTGIFACVGLLGLSLW. Residues 1309–1352 are Cytoplasmic-facing; the sequence is RGGDTTMRKGMPLLAGAATAASGLTRASLSVVFILCATAASRRS. The chain crosses the membrane as a helical span at residues 1353 to 1373; the sequence is WPIGEIMAIVGIVGTGFGMAV. Residues 1374–1376 lie on the Lumenal side of the membrane; sequence NDQ. Residues 1377–1397 traverse the membrane as a helical segment; the sequence is ASLAGPMLVFGLIMIVYATLG. The Cytoplasmic segment spans residues 1398 to 1447; that stretch reads RADGLTLKRVGDITWEEEAVHSGSSTRYDVTLNEAGEFKLVHEEPVVWSH. Residues 1404–1443 are interacts with and activates NS3 protease; that stretch reads LKRVGDITWEEEAVHSGSSTRYDVTLNEAGEFKLVHEEPV. Residues 1448 to 1468 constitute an intramembrane region (helical); that stretch reads VVFLVVALIAASVHPIALVVV. Residues 1469–2154 are Cytoplasmic-facing; the sequence is TIIWTYGKKH…ASTNAPEAVT (686 aa). A Peptidase S7 domain is found at 1481 to 1661; sequence GGVLWDIPIA…GGEGVTEEPL (181 aa). Catalysis depends on charge relay system; for serine protease NS3 activity residues H1532, D1556, and S1617. One can recognise a Helicase ATP-binding domain in the interval 1665 to 1821; sequence ATMLRKGKLT…ESNGEIEDLR (157 aa). An important for RNA-binding region spans residues 1669–1672; sequence RKGK. 1678–1685 contacts ATP; it reads YHPGAGKT. Positions 1769–1772 match the DEAH box motif; sequence DEAH. The Helicase C-terminal domain maps to 1816–1995; that stretch reads EIEDLRRDIP…GMVAPLYDVE (180 aa). Residues 2155-2175 form a helical membrane-spanning segment; that stretch reads ILLMTGIVVACTLGVGLAFMW. The Lumenal segment spans residues 2176 to 2181; that stretch reads PKGVDK. The helical intramembrane region spans 2182–2200; the sequence is MSMGMITMSIAGYLMLQGG. Position 2201 (L2201) is a topological domain, lumenal. A helical transmembrane segment spans residues 2202–2222; it reads TPVQVASVLLIFFIFMVVLIP. The Cytoplasmic portion of the chain corresponds to 2223–2235; it reads EAGTQRSINDNKT. Residues 2236–2250 form a helical membrane-spanning segment; the sequence is LYVLLGVALLIGAIT. Topologically, residues 2251–2285 are cytoplasmic; the sequence is ANEMGYLEKTKRDLLGERVQNEWKLELPMFDLRPG. The segment at residues 2286-2306 is an intramembrane region (helical); sequence AAWSIYVGLATLVMPVLDHWI. Topologically, residues 2307 to 2354 are lumenal; sequence RTEYGSLSLTGIAQQASILQAMDKGVPFFKLNMSVIVLLVSVWNNFSM. Residues 2355-2375 form a helical membrane-spanning segment; sequence LSVLCGVGLLGVHCAFVLPGL. The Cytoplasmic segment spans residues 2376-2418; sequence RAQAAKQAQRRVYHGVAKNPVVDGQTTAEIETAPEMPPLYEKK. A helical transmembrane segment spans residues 2419-2439; sequence LALVLLGVVAIANGVMVRSAF. At 2440–2467 the chain is on the lumenal side; sequence SMAETVVLLSAAVGPLLEGNTSAIWNGP. A helical membrane pass occupies residues 2468 to 2488; the sequence is MAVAMAGIMRGNYYAGIGLAY. Residues 2489 to 3401 are Cytoplasmic-facing; that stretch reads NLWILQSPKR…YSVQEVGTVL (913 aa). Residues 2499–2763 enclose the mRNA cap 0-1 NS5-type MT domain; the sequence is GRSTTMTLGE…DVVFPTGTRN (265 aa). S2554 serves as a coordination point for S-adenosyl-L-methionine. S2554 bears the Phosphoserine mark. K2559 serves as the catalytic For 2'-O-MTase activity. S-adenosyl-L-methionine-binding residues include G2584, W2585, T2602, L2603, D2629, and V2630. D2644 functions as the For 2'-O-MTase activity in the catalytic mechanism. I2645 contacts S-adenosyl-L-methionine. Active-site for 2'-O-MTase activity residues include K2680 and E2716. Y2718 is an S-adenosyl-L-methionine binding site. The Nuclear localization signal motif lies at 2869–2902; the sequence is RAIMEVVNKWMFDFLAREKAPRICTKEEFINKVR. 4 residues coordinate Zn(2+): E2936, H2940, C2945, and C2948. The region spanning 3026-3178 is the RdRp catalytic domain; it reads GIMYADDTAG…APLDERFGLA (153 aa). Zn(2+) is bound by residues H3213, C3229, and C3348.

The protein in the N-terminal section; belongs to the class I-like SAM-binding methyltransferase superfamily. mRNA cap 0-1 NS5-type methyltransferase family. Homodimer. Interacts (via N-terminus) with host EXOC1 (via C-terminus); this interaction results in EXOC1 degradation through the proteasome degradation pathway. As to quaternary structure, forms heterodimers with envelope protein E in the endoplasmic reticulum and Golgi. In terms of assembly, homodimer; in the endoplasmic reticulum and Golgi. Interacts with protein prM. Interacts with non-structural protein 1. Homodimer; Homohexamer when secreted. Interacts with envelope protein E. NS1 interacts with NS4B. Interacts with host complement protein CFH; this interaction leads to the degradation of C3. As to quaternary structure, interacts (via N-terminus) with serine protease NS3. In terms of assembly, forms a heterodimer with serine protease NS3. May form homooligomers. Forms a heterodimer with NS2B. Interacts with non-structural protein 2A (via N-terminus). Interacts with NS4B. Interacts with unphosphorylated RNA-directed RNA polymerase NS5; this interaction stimulates RNA-directed RNA polymerase NS5 guanylyltransferase activity. NS3 interacts with host PDCD6IP; this interaction contributes to virion release. As to quaternary structure, interacts with serine protease NS3. In terms of assembly, homodimer. Interacts with host STAT2; this interaction prevents the establishment of cellular antiviral state. Interacts with serine protease NS3. Interacts with host TRIM23; this interaction leads to NS5 ubiquitination. In terms of processing, specific enzymatic cleavages in vivo yield mature proteins. The nascent capsid protein C contains a C-terminal hydrophobic domain that act as a signal sequence for translocation of prM into the lumen of the ER. Mature capsid protein C is cleaved at a site upstream of this hydrophobic domain by NS3. prM is cleaved in post-Golgi vesicles by a host furin, releasing the mature small envelope protein M, and peptide pr. Non-structural protein 2A-alpha, a C-terminally truncated form of non-structural protein 2A, results from partial cleavage by NS3. Specific enzymatic cleavages in vivo yield mature proteins peptide 2K acts as a signal sequence and is removed from the N-terminus of NS4B by the host signal peptidase in the ER lumen. Signal cleavage at the 2K-4B site requires a prior NS3 protease-mediated cleavage at the 4A-2K site. Cleaved in post-Golgi vesicles by a host furin, releasing the mature small envelope protein M, and peptide pr. This cleavage is incomplete as up to 30% of viral particles still carry uncleaved prM. Post-translationally, N-glycosylated. In terms of processing, N-glycosylated. The excreted form is glycosylated and this is required for efficient secretion of the protein from infected cells. Polyubiquitinated; ubiquitination is probably mediated by host TRIM23 and is prerequisite for NS5-STAT2 interaction. NS5 is not ISGylated or sumoylated. Post-translationally, phosphorylated on serines residues. This phosphorylation may trigger NS5 nuclear localization.

The protein resides in the virion. Its subcellular location is the host nucleus. The protein localises to the host cytoplasm. It is found in the host perinuclear region. It localises to the virion membrane. The protein resides in the host endoplasmic reticulum membrane. Its subcellular location is the secreted. The catalysed reaction is Selective hydrolysis of -Xaa-Xaa-|-Yaa- bonds in which each of the Xaa can be either Arg or Lys and Yaa can be either Ser or Ala.. It carries out the reaction RNA(n) + a ribonucleoside 5'-triphosphate = RNA(n+1) + diphosphate. The enzyme catalyses a ribonucleoside 5'-triphosphate + H2O = a ribonucleoside 5'-diphosphate + phosphate + H(+). It catalyses the reaction ATP + H2O = ADP + phosphate + H(+). The catalysed reaction is a 5'-end (5'-triphosphoguanosine)-ribonucleoside in mRNA + S-adenosyl-L-methionine = a 5'-end (N(7)-methyl 5'-triphosphoguanosine)-ribonucleoside in mRNA + S-adenosyl-L-homocysteine. It carries out the reaction a 5'-end (N(7)-methyl 5'-triphosphoguanosine)-ribonucleoside in mRNA + S-adenosyl-L-methionine = a 5'-end (N(7)-methyl 5'-triphosphoguanosine)-(2'-O-methyl-ribonucleoside) in mRNA + S-adenosyl-L-homocysteine + H(+). Functionally, plays a role in virus budding by binding to the cell membrane and gathering the viral RNA into a nucleocapsid that forms the core of a mature virus particle. During virus entry, may induce genome penetration into the host cytoplasm after hemifusion induced by the surface proteins. Can migrate to the cell nucleus where it modulates host functions. Its function is as follows. Inhibits RNA silencing by interfering with host Dicer. Prevents premature fusion activity of envelope proteins in trans-Golgi by binding to envelope protein E at pH6.0. After virion release in extracellular space, gets dissociated from E dimers. In terms of biological role, acts as a chaperone for envelope protein E during intracellular virion assembly by masking and inactivating envelope protein E fusion peptide. prM is the only viral peptide matured by host furin in the trans-Golgi network probably to avoid catastrophic activation of the viral fusion activity in acidic Golgi compartment prior to virion release. prM-E cleavage is inefficient, and many virions are only partially matured. These uncleaved prM would play a role in immune evasion. Functionally, may play a role in virus budding. Exerts cytotoxic effects by activating a mitochondrial apoptotic pathway through M ectodomain. May display a viroporin activity. Its function is as follows. Binds to host cell surface receptor and mediates fusion between viral and cellular membranes. Envelope protein is synthesized in the endoplasmic reticulum in the form of heterodimer with protein prM. They play a role in virion budding in the ER, and the newly formed immature particle is covered with 60 spikes composed of heterodimer between precursor prM and envelope protein E. The virion is transported to the Golgi apparatus where the low pH causes dissociation of PrM-E heterodimers and formation of E homodimers. prM-E cleavage is inefficient, and many virions are only partially matured. These uncleaved prM would play a role in immune evasion. Involved in immune evasion, pathogenesis and viral replication. Once cleaved off the polyprotein, is targeted to three destinations: the viral replication cycle, the plasma membrane and the extracellular compartment. Essential for viral replication. Required for formation of the replication complex and recruitment of other non-structural proteins to the ER-derived membrane structures. Excreted as a hexameric lipoparticle that plays a role against host immune response. Antagonizing the complement function. Binds to the host macrophages and dendritic cells. Inhibits signal transduction originating from Toll-like receptor 3 (TLR3). In terms of biological role, component of the viral RNA replication complex that functions in virion assembly and antagonizes the host immune response. Functionally, required cofactor for the serine protease function of NS3. May have membrane-destabilizing activity and form viroporins. Its function is as follows. Displays three enzymatic activities: serine protease, NTPase and RNA helicase. NS3 serine protease, in association with NS2B, performs its autocleavage and cleaves the polyprotein at dibasic sites in the cytoplasm: C-prM, NS2A-NS2B, NS2B-NS3, NS3-NS4A, NS4A-2K and NS4B-NS5. NS3 RNA helicase binds RNA and unwinds dsRNA in the 3' to 5' direction. Also plays a role in virus assembly. Regulates the ATPase activity of the NS3 helicase activity. NS4A allows NS3 helicase to conserve energy during unwinding. In terms of biological role, functions as a signal peptide for NS4B and is required for the interferon antagonism activity of the latter. Functionally, induces the formation of ER-derived membrane vesicles where the viral replication takes place. Inhibits interferon (IFN)-induced host STAT1 phosphorylation and nuclear translocation, thereby preventing the establishment of cellular antiviral state by blocking the IFN-alpha/beta pathway. Its function is as follows. Replicates the viral (+) and (-) RNA genome, and performs the capping of genomes in the cytoplasm. NS5 methylates viral RNA cap at guanine N-7 and ribose 2'-O positions. Besides its role in RNA genome replication, also prevents the establishment of cellular antiviral state by blocking the interferon-alpha/beta (IFN-alpha/beta) signaling pathway. IFN-I induces binding of NS5 to host IFN-activated transcription factor STAT2, preventing its transcriptional activity. Host TRIM23 is the E3 ligase that interacts with and polyubiquitinates NS5 to promote its binding to STAT2 and trigger IFN-I signaling inhibition. The polypeptide is Genome polyprotein (Edge Hill virus (EHV)).